A 248-amino-acid chain; its full sequence is CKLF-like MARVEL transmembrane domain-containing protein 2 (248 aa).

Residues 1–63 form a disordered region; that stretch reads MAPKAAKGAK…KAVQPKHEVG (63 aa). Residues 12-22 are compositionally biased toward pro residues; the sequence is EPAPAPPPPGA. The segment covering 23–63 has biased composition (basic and acidic residues); the sequence is KPEEDKKDGKEPSDKPQKAVQDHKEPSDKPQKAVQPKHEVG. One can recognise an MARVEL domain in the interval 82-204; sequence FWLLGHAEIK…DVCLQRNHFR (123 aa). A run of 3 helical transmembrane segments spans residues 116 to 136, 147 to 167, and 178 to 198; these read LIITMEISFFSFFILLYSFAI, ISDLFNDLIACAFLVGAVVFA, and YLLAVILIGAAGVFAFIDVCL. Positions 208-248 are disordered; sequence AKKHMLVPPPGKEKGPQQGKGPEPAKPPEPGKPPGPAKGKK. Residues 231–248 are compositionally biased toward pro residues; it reads PAKPPEPGKPPGPAKGKK.

It belongs to the chemokine-like factor family. Highly expressed in testis.

It localises to the membrane. This is CKLF-like MARVEL transmembrane domain-containing protein 2 (CMTM2) from Homo sapiens (Human).